Reading from the N-terminus, the 130-residue chain is DUF35 domain-containing scaffold protein (130 aa).

The Zn(2+) site is built by C20, C23, C34, and C37.

It belongs to the scaffold protein DUF35 family. In terms of assembly, interacts with acetoacetyl-CoA thiolase and HMG-CoA synthase (HMGCS) that catalyzes the first and second step in the mevalonate pathway, respectively.

Its function is as follows. Functions as a scaffold to connect the acetoacetyl-CoA thiolase and HMG-CoA synthase (HMGCS) dimers in the channeling thiolase/HMGCS complex, which allows for efficient coupling of the endergonic thiolase reaction with the exergonic HMGCS reaction. This chain is DUF35 domain-containing scaffold protein, found in Methanothermococcus thermolithotrophicus (Methanococcus thermolithotrophicus).